The following is a 296-amino-acid chain: 33 kDa chaperonin (296 aa).

Cystine bridges form between Cys-237-Cys-239 and Cys-270-Cys-273.

The protein belongs to the HSP33 family. Post-translationally, under oxidizing conditions two disulfide bonds are formed involving the reactive cysteines. Under reducing conditions zinc is bound to the reactive cysteines and the protein is inactive.

It localises to the cytoplasm. Its function is as follows. Redox regulated molecular chaperone. Protects both thermally unfolding and oxidatively damaged proteins from irreversible aggregation. Plays an important role in the bacterial defense system toward oxidative stress. The sequence is that of 33 kDa chaperonin from Acetivibrio thermocellus (strain ATCC 27405 / DSM 1237 / JCM 9322 / NBRC 103400 / NCIMB 10682 / NRRL B-4536 / VPI 7372) (Clostridium thermocellum).